The primary structure comprises 551 residues: 2-(3-amino-3-carboxypropyl)histidine synthase subunit 2 (551 aa).

[4Fe-4S] cluster-binding residues include C116, C137, and C371.

Belongs to the DPH1/DPH2 family. DPH2 subfamily. Component of the 2-(3-amino-3-carboxypropyl)histidine synthase complex composed of DPH1, DPH2, DPH3 and a NADH-dependent reductase, predominantly CBR1. The cofactor is [4Fe-4S] cluster.

Its subcellular location is the cytoplasm. Its pathway is protein modification; peptidyl-diphthamide biosynthesis. Required for the first step of diphthamide biosynthesis, a post-translational modification of histidine which occurs in elongation factor 2. DPH1 and DPH2 transfer a 3-amino-3-carboxypropyl (ACP) group from S-adenosyl-L-methionine (SAM) to a histidine residue, the reaction is assisted by a reduction system comprising DPH3 and a NADH-dependent reductase, predominantly CBR1. Facilitates the reduction of the catalytic iron-sulfur cluster found in the DPH1 subunit. This is 2-(3-amino-3-carboxypropyl)histidine synthase subunit 2 (DPH2) from Candida glabrata (strain ATCC 2001 / BCRC 20586 / JCM 3761 / NBRC 0622 / NRRL Y-65 / CBS 138) (Yeast).